The sequence spans 261 residues: Glandular kallikrein-7, submandibular/renal (261 aa).

A signal peptide spans 1–18 (MWFLILFLDLSLGQIDAA). Positions 19-24 (PPGQSR) are cleaved as a propeptide — activation peptide. The 234-residue stretch at 25-258 (VIGGYKCEKN…FTSWIKEVMK (234 aa)) folds into the Peptidase S1 domain. 5 disulfide bridges follow: C31–C173, C50–C66, C152–C219, C184–C198, and C209–C234. H65 functions as the Charge relay system in the catalytic mechanism. A glycan (N-linked (GlcNAc...) asparagine) is linked at N108. D120 acts as the Charge relay system in catalysis. Residue S213 is the Charge relay system of the active site.

Belongs to the peptidase S1 family. Kallikrein subfamily. Kidney and submandibular gland. Not expressed in liver, pancreas, spleen, parotid, testis, cortex, prostate, ovary and pituitary.

It catalyses the reaction Preferential cleavage of Arg-|-Xaa bonds in small molecule substrates. Highly selective action to release kallidin (lysyl-bradykinin) from kininogen involves hydrolysis of Met-|-Xaa or Leu-|-Xaa.. Functionally, glandular kallikreins cleave Met-Lys and Arg-Ser bonds in kininogen to release Lys-bradykinin. Predominant kallikrein protein in the kidney. This chain is Glandular kallikrein-7, submandibular/renal (Klk7), found in Rattus norvegicus (Rat).